The primary structure comprises 269 residues: Mitochondrial S-adenosylmethionine carrier protein (269 aa).

Solcar repeat units follow at residues Arg4–Leu77, Leu85–Leu167, and Val176–Leu264. Helical transmembrane passes span Glu5–Phe25, Ile49–Val69, Tyr84–Ile104, Arg141–Trp161, Ser181–Val201, and Phe237–Ala257.

The protein belongs to the mitochondrial carrier (TC 2.A.29) family.

The protein resides in the mitochondrion inner membrane. It catalyses the reaction S-adenosyl-L-homocysteine(out) + S-adenosyl-L-methionine(in) = S-adenosyl-L-homocysteine(in) + S-adenosyl-L-methionine(out). Mitochondrial S-adenosyl-L-methionine/S-adenosyl-L-homocysteine antiporter. Mediates the exchange of cytosolic S-adenosyl-L-methionine, the predominant methyl-group donor for macromolecule methylation processes, for mitochondrial S-adenosylhomocysteine(SAH), a by-product of methylation reactions. The sequence is that of Mitochondrial S-adenosylmethionine carrier protein (slc25a26) from Xenopus tropicalis (Western clawed frog).